The chain runs to 776 residues: Meiotic expression up-regulated protein 1/2 (776 aa).

Coiled coils occupy residues tyrosine 87–glutamate 122, phenylalanine 173–glutamate 227, tyrosine 265–glutamate 307, lysine 362–serine 430, and isoleucine 496–leucine 595.

This chain is Meiotic expression up-regulated protein 1/2 (meu1), found in Schizosaccharomyces pombe (strain 972 / ATCC 24843) (Fission yeast).